A 608-amino-acid polypeptide reads, in one-letter code: Lysophospholipase 2 (608 aa).

The N-terminal stretch at 1–17 (MLVWQSILLFLVGCVLS) is a signal peptide. Positions 30 to 564 (QCPEGKLTRS…ENYCWDGTIY (535 aa)) constitute a PLA2c domain. N-linked (GlcNAc...) asparagine glycosylation is found at N259, N365, N450, N464, N491, and N572.

This sequence belongs to the lysophospholipase family.

It is found in the secreted. The catalysed reaction is a 1-acyl-sn-glycero-3-phosphocholine + H2O = sn-glycerol 3-phosphocholine + a fatty acid + H(+). Catalyzes the release of fatty acids from lysophospholipids. Phospholipase B may well contribute to pathogenicity by abetting the fungus in damaging and traversing host cell membranes, processes which likely increase the rapidity of disseminated infection. This is Lysophospholipase 2 (PLB2) from Candida albicans (Yeast).